Consider the following 317-residue polypeptide: 4-hydroxy-3-methylbut-2-enyl diphosphate reductase (317 aa).

[4Fe-4S] cluster is bound at residue C12. Positions 41 and 74 each coordinate (2E)-4-hydroxy-3-methylbut-2-enyl diphosphate. Residues H41 and H74 each contribute to the dimethylallyl diphosphate site. Isopentenyl diphosphate is bound by residues H41 and H74. C97 lines the [4Fe-4S] cluster pocket. (2E)-4-hydroxy-3-methylbut-2-enyl diphosphate is bound at residue H125. A dimethylallyl diphosphate-binding site is contributed by H125. H125 serves as a coordination point for isopentenyl diphosphate. Residue E127 is the Proton donor of the active site. A (2E)-4-hydroxy-3-methylbut-2-enyl diphosphate-binding site is contributed by T168. [4Fe-4S] cluster is bound at residue C198. Residues S226, S227, N228, and S270 each coordinate (2E)-4-hydroxy-3-methylbut-2-enyl diphosphate. Dimethylallyl diphosphate contacts are provided by S226, S227, N228, and S270. Positions 226, 227, 228, and 270 each coordinate isopentenyl diphosphate.

It belongs to the IspH family. In terms of assembly, homodimer. It depends on [4Fe-4S] cluster as a cofactor.

It carries out the reaction isopentenyl diphosphate + 2 oxidized [2Fe-2S]-[ferredoxin] + H2O = (2E)-4-hydroxy-3-methylbut-2-enyl diphosphate + 2 reduced [2Fe-2S]-[ferredoxin] + 2 H(+). It catalyses the reaction dimethylallyl diphosphate + 2 oxidized [2Fe-2S]-[ferredoxin] + H2O = (2E)-4-hydroxy-3-methylbut-2-enyl diphosphate + 2 reduced [2Fe-2S]-[ferredoxin] + 2 H(+). Its pathway is isoprenoid biosynthesis; dimethylallyl diphosphate biosynthesis; dimethylallyl diphosphate from (2E)-4-hydroxy-3-methylbutenyl diphosphate: step 1/1. It participates in isoprenoid biosynthesis; isopentenyl diphosphate biosynthesis via DXP pathway; isopentenyl diphosphate from 1-deoxy-D-xylulose 5-phosphate: step 6/6. In terms of biological role, catalyzes the conversion of 1-hydroxy-2-methyl-2-(E)-butenyl 4-diphosphate (HMBPP) into a mixture of isopentenyl diphosphate (IPP) and dimethylallyl diphosphate (DMAPP). Acts in the terminal step of the DOXP/MEP pathway for isoprenoid precursor biosynthesis. The sequence is that of 4-hydroxy-3-methylbut-2-enyl diphosphate reductase from Edwardsiella ictaluri (strain 93-146).